Here is a 673-residue protein sequence, read N- to C-terminus: UvrABC system protein B (673 aa).

The 158-residue stretch at 26–183 (EGLEDGLAHQ…RRLAELQYAR (158 aa)) folds into the Helicase ATP-binding domain. Position 39–46 (39–46 (GVTGSGKT)) interacts with ATP. A Beta-hairpin motif is present at residues 92 to 115 (YYDYYQPEAYVPSSDTFIEKDASV). Residues 431–597 (QVDDLLSEIR…GLNKKVVDIL (167 aa)) enclose the Helicase C-terminal domain. The interval 608–627 (AKGRGKSRPIVEPDNVPMDM) is disordered. A UVR domain is found at 633 to 668 (QQKIHELEGLMMQHAQNLEFEEAAQIRDQLHQLRDL).

It belongs to the UvrB family. In terms of assembly, forms a heterotetramer with UvrA during the search for lesions. Interacts with UvrC in an incision complex.

The protein resides in the cytoplasm. In terms of biological role, the UvrABC repair system catalyzes the recognition and processing of DNA lesions. A damage recognition complex composed of 2 UvrA and 2 UvrB subunits scans DNA for abnormalities. Upon binding of the UvrA(2)B(2) complex to a putative damaged site, the DNA wraps around one UvrB monomer. DNA wrap is dependent on ATP binding by UvrB and probably causes local melting of the DNA helix, facilitating insertion of UvrB beta-hairpin between the DNA strands. Then UvrB probes one DNA strand for the presence of a lesion. If a lesion is found the UvrA subunits dissociate and the UvrB-DNA preincision complex is formed. This complex is subsequently bound by UvrC and the second UvrB is released. If no lesion is found, the DNA wraps around the other UvrB subunit that will check the other stand for damage. The polypeptide is UvrABC system protein B (Escherichia coli O7:K1 (strain IAI39 / ExPEC)).